The chain runs to 28 residues: Potassium channel toxin alpha-KTx 13.2 (28 aa).

3 disulfide bridges follow: C2–C19, C6–C24, and C10–C26. Positions 17–24 (IKCINGSC) are interaction with Ca(2+)-activated K(+) channels.

It belongs to the short scorpion toxin superfamily. Potassium channel inhibitor family. Alpha-KTx 13 subfamily. As to expression, expressed by the venom gland.

It is found in the secreted. In terms of biological role, potent and selective inhibitor of Kv1.2/KCNA2 potassium channels. The polypeptide is Potassium channel toxin alpha-KTx 13.2 (Orthochirus scrobiculosus (Central Asian scorpion)).